Consider the following 1789-residue polypeptide: Protein sprint (1789 aa).

Disordered regions lie at residues 53 to 120 (TTAN…AHPP), 140 to 190 (TTTA…DLAN), 218 to 237 (PLWN…HPTG), 261 to 317 (QRMH…QAGL), 329 to 378 (LNNN…DADD), and 401 to 460 (RRSR…PCDL). The span at 82 to 114 (SINNNKNNNISNKNNNNNNNNNNNINNNNNNNN) shows a compositional bias: low complexity. Over residues 140-149 (TTTANQLQQQ) the composition is skewed to polar residues. The segment covering 176-185 (PSEEDGDTDA) has biased composition (acidic residues). Positions 223-233 (RNGNGSTTTHC) are enriched in polar residues. Residues 295 to 317 (NNNNINNNHNGQQSQKSQQQAGL) are compositionally biased toward low complexity. A compositionally biased stretch (polar residues) spans 337-361 (QPGSMTPASNRTGLDSNQNQKQNLN). Low complexity predominate over residues 409–418 (QSRTSLVSSS). The span at 428-445 (TSSEDDEEEPVEAEDEGE) shows a compositional bias: acidic residues. In terms of domain architecture, SH2 spans 473 to 566 (WFLPGIQRSG…ELPVQLMLPR (94 aa)). Disordered regions lie at residues 632-689 (FFSD…SGGQ), 744-787 (TAPE…SANG), 852-918 (GECK…ILES), 969-1006 (DLLA…QSLL), 1040-1067 (AAED…QGSP), 1094-1123 (RSQM…MLQP), and 1138-1160 (PKPK…KRAR). A compositionally biased stretch (pro residues) spans 639-649 (KPPPTGAPPLP). The segment covering 671–686 (TPSDTTNSSLSSFTTS) has biased composition (low complexity). Residues 857 to 868 (TLSSQGSSSNDS) are compositionally biased toward polar residues. A compositionally biased stretch (basic and acidic residues) spans 903 to 914 (AGKESQHYKESD). The span at 974 to 984 (TPSTPTPTQQS) shows a compositional bias: low complexity. Composition is skewed to polar residues over residues 994–1006 (TATP…QSLL) and 1048–1065 (TTPT…SKQG). Residues 1143 to 1154 (SQQQQQSQQQQQ) are compositionally biased toward low complexity. The VPS9 domain occupies 1531 to 1673 (RSEDIQLLAQ…LKTFMASEGE (143 aa)). The region spanning 1689–1777 (CSSVLRVIIP…CMLAYKRIDA (89 aa)) is the Ras-associating domain.

This sequence belongs to the RIN (Ras interaction/interference) family. In late cellular blastoderm embryos, it is expressed in the posterior end. Then, as development proceeds, it is expressed in the developing midgut, amnioserosa and in a specific subset of CNS neurons. Isoform 1 is expressed earlier in developing midgut and amnioserosa, but is not expressed in the CNS.

Its function is as follows. Potential Ras effector protein. May function as a guanine nucleotide exchange (GEF), by exchanging bound GDP for free GTP. The sequence is that of Protein sprint (spri) from Drosophila melanogaster (Fruit fly).